A 787-amino-acid polypeptide reads, in one-letter code: Signal transducer and activator of transcription 5B (787 aa).

The residue at position 90 (Tyr90) is a Phosphotyrosine. Ser128 and Ser193 each carry phosphoserine. The interval 232–321 is required for interaction with NMI; the sequence is KHQKTLQLLR…MLAEVNATIT (90 aa). Residues 589 to 686 enclose the SH2 domain; the sequence is WNDGAILGFV…EVYSKYYTPV (98 aa). The residue at position 682 (Tyr682) is a Phosphotyrosine. Tyr699 carries the post-translational modification Phosphotyrosine; by HCK, JAK and PTK6.

Belongs to the transcription factor STAT family. As to quaternary structure, upon activation, forms homodimers. Forms also heterodimers with related family members. Binds NR3C1. Interacts with NCOA1. Interacts with NMI. Interacts with SOCS7. Interacts (via SH2 domain) with INSR. Interacts with CPEB3; this inhibits STAT5B-mediated transcriptional activation. Tyrosine phosphorylated in response to signaling via activated KIT, resulting in translocation to the nucleus. Tyrosine phosphorylated in response to signaling via activated FLT3; wild-type FLT3 results in much weaker phosphorylation than constitutively activated mutant FLT3. Alternatively, can be phosphorylated by JAK2. Phosphorylation at Tyr-699 by PTK6 or HCK leads to an increase of its transcriptional activity.

The protein resides in the cytoplasm. It is found in the nucleus. Its function is as follows. Carries out a dual function: signal transduction and activation of transcription. Mediates cellular responses to the cytokine KITLG/SCF and other growth factors. Binds to the GAS element and activates PRL-induced transcription. Positively regulates hematopoietic/erythroid differentiation. This Homo sapiens (Human) protein is Signal transducer and activator of transcription 5B (STAT5B).